We begin with the raw amino-acid sequence, 315 residues long: Transaldolase (315 aa).

The active-site Schiff-base intermediate with substrate is the lysine 125.

This sequence belongs to the transaldolase family. Type 1 subfamily. As to quaternary structure, homodimer.

Its subcellular location is the cytoplasm. It carries out the reaction D-sedoheptulose 7-phosphate + D-glyceraldehyde 3-phosphate = D-erythrose 4-phosphate + beta-D-fructose 6-phosphate. Its pathway is carbohydrate degradation; pentose phosphate pathway; D-glyceraldehyde 3-phosphate and beta-D-fructose 6-phosphate from D-ribose 5-phosphate and D-xylulose 5-phosphate (non-oxidative stage): step 2/3. In terms of biological role, transaldolase is important for the balance of metabolites in the pentose-phosphate pathway. The protein is Transaldolase of Polaromonas naphthalenivorans (strain CJ2).